The sequence spans 558 residues: Atlastin-1 (558 aa).

The disordered stretch occupies residues 1-29; sequence MAKSRRDRNSWGGFSEKSSDWSSEEEEPV. Residues 1–34 form an N-terminal hypervariable region (HVR) region; the sequence is MAKSRRDRNSWGGFSEKSSDWSSEEEEPVRKAGP. At 1–449 the chain is on the cytoplasmic side; it reads MAKSRRDRNS…NIFHAARTPA (449 aa). Phosphoserine is present on residues serine 10, serine 22, and serine 23. Positions 64–309 constitute a GB1/RHD3-type G domain; it reads DKEVVAVSVA…LIPWLLSPES (246 aa). Positions 77, 78, 79, 80, 81, 82, 148, 217, 218, 276, and 279 each coordinate GDP. Positions 77, 78, 79, 80, 81, and 82 each coordinate GTP. Serine 81 provides a ligand contact to Mg(2+). Positions 217, 218, and 276 each coordinate GTP. Residues 347 to 438 form a 3HB (three-helix bundle) domain region; the sequence is MLQATAEANN…YIQYIKHNDS (92 aa). An N6-acetyllysine modification is found at lysine 395. Residues 412–439 are a coiled coil; sequence EFSRRYLQQLESEIDELYIQYIKHNDSK. A linker region spans residues 439–447; the sequence is KNIFHAART. The helical transmembrane segment at 450–470 threads the bilayer; it reads TLFVVIFITYVIAGVTGFIGL. A topological domain (lumenal) is located at residue aspartate 471. The helical transmembrane segment at 472 to 492 threads the bilayer; it reads IIASLCNMIMGLTLITLCTWA. At 493-558 the chain is on the cytoplasmic side; it reads YIRYSGEYRE…PTEQPEKKKI (66 aa). Positions 521 to 558 are autoinhibitory domain; it reads NEALYKLYSAAATHRHLYQQAFPAPKSEPTEQPEKKKI.

Belongs to the TRAFAC class dynamin-like GTPase superfamily. GB1/RHD3 GTPase family. GB1 subfamily. Monomeric and homodimeric. The homodimer, transiently formed by two molecules on opposing membranes, is the active form mediating ER membrane fusion. Interacts with REEP1, REEP5, RTN3 and RTN4 (via the transmembrane region); these proteins are involved in endoplasmic reticulum tubular network organization. Interacts with ZFYVE27; both proteins are involved in endoplasmic reticulum tubular network organization. Interacts with ARL6IP1; both proteins are involved in endoplasmic reticulum tubular network organization. Interacts with SPAST; the interaction is direct, could recruit SPAST to Golgi membranes. Interacts (via N-terminal region) with MAP4K4 (via CNH regulatory domain). May interact with TMED2. Interacts with CPT1C. Phosphorylated. Phosphorylation, by different kinases, of the N-terminal hypervariable region (HVR) regulates the ATL1-mediated membrane tethering step. Detected in brain where it is abundant in lamina V of the cerebral cortex. Also expressed within the hippocampus, mainly in pyramidal neurons in CA1 and CA3. Weakly expressed in the striatum and more robustly in amygdala and several thalamic nuclei. Also detected in several mesopontine nuclei (at protein level).

The protein resides in the endoplasmic reticulum membrane. The protein localises to the golgi apparatus membrane. Its subcellular location is the cell projection. It is found in the axon. The catalysed reaction is GTP + H2O = GDP + phosphate + H(+). Functionally, atlastin-1 (ATL1) is a membrane-anchored GTPase that mediates the GTP-dependent fusion of endoplasmic reticulum (ER) membranes, maintaining the continuous ER network. It facilitates the formation of three-way junctions where ER tubules intersect. Two atlastin-1 on neighboring ER tubules bind GTP and form loose homodimers through the GB1/RHD3-type G domains and 3HB regions. Upon GTP hydrolysis, the 3HB regions tighten, pulling the membranes together to drive their fusion. After fusion, the homodimer disassembles upon release of inorganic phosphate (Pi). Subsequently, GDP dissociates, resetting the monomers to a conformation ready for a new fusion cycle. May also regulate more or less directly Golgi biogenesis. Indirectly regulates axonal development. In Rattus norvegicus (Rat), this protein is Atlastin-1.